A 176-amino-acid chain; its full sequence is NADH-dependent flavin reductase (176 aa).

Residues 39–46 (EDSVHGMT) and 48–49 (NA) each bind FAD. An NAD(+)-binding site is contributed by serine 52. FAD-binding positions include 63-65 (SIS), 69-70 (KM), and 95-96 (HF). Residues histidine 137 and 157 to 160 (FYTG) each bind NAD(+).

This sequence belongs to the non-flavoprotein flavin reductase family. As to quaternary structure, homodimer. 4-nitrophenol 2-monooxygenase complex consists of an oxygenase component NphA1 and a flavin reductase component NphA2.

It carries out the reaction a reduced flavin + NAD(+) = an oxidized flavin + NADH + 2 H(+). Functionally, catalyzes the reduction of FAD with the concomitant oxidation of NADH. NAD is the physiological electron donor. Subsequently, the reduced flavins diffuse to the oxygenase component NphA2. The sequence is that of NADH-dependent flavin reductase (nphA2) from Rhodococcus sp.